The chain runs to 85 residues: Large ribosomal subunit protein bL31B (85 aa).

The protein belongs to the bacterial ribosomal protein bL31 family. Type B subfamily. As to quaternary structure, part of the 50S ribosomal subunit.

The sequence is that of Large ribosomal subunit protein bL31B from Micrococcus luteus (strain ATCC 4698 / DSM 20030 / JCM 1464 / CCM 169 / CCUG 5858 / IAM 1056 / NBRC 3333 / NCIMB 9278 / NCTC 2665 / VKM Ac-2230) (Micrococcus lysodeikticus).